The primary structure comprises 276 residues: Undecaprenyl-diphosphatase (276 aa).

Helical transmembrane passes span 84 to 104 (YRLGWYVIIGTIPICILGLFF), 115 to 135 (LWVVVTALVVFSGVIALAEYV), 188 to 208 (FGFLLAIPAVFASGLFSLPDA), 222 to 242 (QLLVATLIAFVLGLTAVAWLL), and 250 to 270 (MYWFVGYRVLVGTGMLVLLAT).

It belongs to the UppP family.

It is found in the cell membrane. It catalyses the reaction di-trans,octa-cis-undecaprenyl diphosphate + H2O = di-trans,octa-cis-undecaprenyl phosphate + phosphate + H(+). Its function is as follows. Catalyzes the dephosphorylation of undecaprenyl diphosphate (UPP). Confers resistance to bacitracin. The sequence is that of Undecaprenyl-diphosphatase from Mycobacterium bovis (strain ATCC BAA-935 / AF2122/97).